The chain runs to 142 residues: Small ribosomal subunit protein uS12 (142 aa).

Residues 1–22 (MPTFNQLVRKGRKAAKKKSTAP) form a disordered region. The segment covering 9–19 (RKGRKAAKKKS) has biased composition (basic residues). Asp-102 carries the 3-methylthioaspartic acid modification.

The protein belongs to the universal ribosomal protein uS12 family. In terms of assembly, part of the 30S ribosomal subunit. Contacts proteins S8 and S17. May interact with IF1 in the 30S initiation complex.

Functionally, with S4 and S5 plays an important role in translational accuracy. Interacts with and stabilizes bases of the 16S rRNA that are involved in tRNA selection in the A site and with the mRNA backbone. Located at the interface of the 30S and 50S subunits, it traverses the body of the 30S subunit contacting proteins on the other side and probably holding the rRNA structure together. The combined cluster of proteins S8, S12 and S17 appears to hold together the shoulder and platform of the 30S subunit. In Acetivibrio thermocellus (strain ATCC 27405 / DSM 1237 / JCM 9322 / NBRC 103400 / NCIMB 10682 / NRRL B-4536 / VPI 7372) (Clostridium thermocellum), this protein is Small ribosomal subunit protein uS12.